The sequence spans 272 residues: MTTLSQISKSVQRHPFHLVDPSPWPFVASLCAFSCAIGGVMYMHAYVNGSFILSISFFCLLLVMFTWWRDVIRESTFEGHHTGIVQQGLRFGVILFIISEILFFFAFFWAFFHSSLAPTIEIGSIWPPKGINVLNPWEIPFLNTLILLLSGCTVTWCHHSLVSNLRNQSVLSLFLTIVLAIVFTTFQAYEYSMADFRLSDGIYGSTFYMATGFHGFHVLVGTISLAVCLIRLLQYQLTQQHHFGFESAAWYWHFVDVVWLFLFVSIYWWGGS.

The next 7 helical transmembrane spans lie at 23–43, 45–65, 91–111, 137–157, 169–189, 210–230, and 249–269; these read PWPF…VMYM, AYVN…LVMF, FGVI…FWAF, WEIP…VTWC, SVLS…FQAY, ATGF…VCLI, and AWYW…IYWW.

This sequence belongs to the cytochrome c oxidase subunit 3 family. As to quaternary structure, component of the cytochrome c oxidase (complex IV, CIV), a multisubunit enzyme composed of a catalytic core of 3 subunits and several supernumerary subunits. The complex exists as a monomer or a dimer and forms supercomplexes (SCs) in the inner mitochondrial membrane with ubiquinol-cytochrome c oxidoreductase (cytochrome b-c1 complex, complex III, CIII).

Its subcellular location is the mitochondrion inner membrane. The enzyme catalyses 4 Fe(II)-[cytochrome c] + O2 + 8 H(+)(in) = 4 Fe(III)-[cytochrome c] + 2 H2O + 4 H(+)(out). Its function is as follows. Component of the cytochrome c oxidase, the last enzyme in the mitochondrial electron transport chain which drives oxidative phosphorylation. The respiratory chain contains 3 multisubunit complexes succinate dehydrogenase (complex II, CII), ubiquinol-cytochrome c oxidoreductase (cytochrome b-c1 complex, complex III, CIII) and cytochrome c oxidase (complex IV, CIV), that cooperate to transfer electrons derived from NADH and succinate to molecular oxygen, creating an electrochemical gradient over the inner membrane that drives transmembrane transport and the ATP synthase. Cytochrome c oxidase is the component of the respiratory chain that catalyzes the reduction of oxygen to water. Electrons originating from reduced cytochrome c in the intermembrane space (IMS) are transferred via the dinuclear copper A center (CU(A)) of subunit 2 and heme A of subunit 1 to the active site in subunit 1, a binuclear center (BNC) formed by heme A3 and copper B (CU(B)). The BNC reduces molecular oxygen to 2 water molecules using 4 electrons from cytochrome c in the IMS and 4 protons from the mitochondrial matrix. The chain is Cytochrome c oxidase subunit 3 (COX3) from Chondrus crispus (Carrageen Irish moss).